Reading from the N-terminus, the 482-residue chain is Dihydrolipoyllysine-residue acetyltransferase component of pyruvate dehydrogenase complex, mitochondrial (482 aa).

A mitochondrion-targeting transit peptide spans 1–28 (MSAFVRVVPRISRSSVLTRSLRLQLRCY). The Lipoyl-binding domain maps to 34–110 (HTIIGMPALS…PVNKPIAVYV (77 aa)). Lys75 is modified (N6-lipoyllysine). Positions 122–170 (FKLEDSGSDSKTSTKAQPAEPQAEKKQEAPAEETKTSAPEAKKSDVAAP) are disordered. A compositionally biased stretch (basic and acidic residues) spans 143–166 (QAEKKQEAPAEETKTSAPEAKKSD). Residues 175–212 (FASPLAKTIALEKGISLKDVHGTGPRGRITKADIESYL) enclose the Peripheral subunit-binding (PSBD) domain. Positions 214 to 251 (KSSKQSSQTSGAAAATPAAATSSTTAGSAPSPSSTASY) are disordered. A compositionally biased stretch (low complexity) spans 217 to 250 (KQSSQTSGAAAATPAAATSSTTAGSAPSPSSTAS). Active-site residues include His455 and Asp459.

Belongs to the 2-oxoacid dehydrogenase family. As to quaternary structure, eukaryotic pyruvate dehydrogenase (PDH) complexes are organized as a core consisting of the oligomeric dihydrolipoamide acetyl-transferase (E2), around which are arranged multiple copies of pyruvate dehydrogenase (E1), dihydrolipoamide dehydrogenase (E3) and protein X (E3BP) bound by non-covalent bonds. The cofactor is (R)-lipoate.

It is found in the mitochondrion matrix. The catalysed reaction is N(6)-[(R)-dihydrolipoyl]-L-lysyl-[protein] + acetyl-CoA = N(6)-[(R)-S(8)-acetyldihydrolipoyl]-L-lysyl-[protein] + CoA. Functionally, the pyruvate dehydrogenase complex catalyzes the overall conversion of pyruvate to acetyl-CoA and CO(2). The polypeptide is Dihydrolipoyllysine-residue acetyltransferase component of pyruvate dehydrogenase complex, mitochondrial (LAT1) (Saccharomyces cerevisiae (strain ATCC 204508 / S288c) (Baker's yeast)).